The following is a 327-amino-acid chain: Probable cell division protein WhiA (327 aa).

Residues 275–308 (SLEELGRLADPQMTKDAVAGRIRRLLTMADKRAE) constitute a DNA-binding region (H-T-H motif).

It belongs to the WhiA family.

Involved in cell division and chromosome segregation. This is Probable cell division protein WhiA from Corynebacterium glutamicum (strain ATCC 13032 / DSM 20300 / JCM 1318 / BCRC 11384 / CCUG 27702 / LMG 3730 / NBRC 12168 / NCIMB 10025 / NRRL B-2784 / 534).